A 311-amino-acid chain; its full sequence is 4-diphosphocytidyl-2-C-methyl-D-erythritol kinase (311 aa).

K16 is a catalytic residue. Residue 100 to 110 (PIGAGLAGGSS) participates in ATP binding. D142 is an active-site residue.

Belongs to the GHMP kinase family. IspE subfamily.

The enzyme catalyses 4-CDP-2-C-methyl-D-erythritol + ATP = 4-CDP-2-C-methyl-D-erythritol 2-phosphate + ADP + H(+). Its pathway is isoprenoid biosynthesis; isopentenyl diphosphate biosynthesis via DXP pathway; isopentenyl diphosphate from 1-deoxy-D-xylulose 5-phosphate: step 3/6. Functionally, catalyzes the phosphorylation of the position 2 hydroxy group of 4-diphosphocytidyl-2C-methyl-D-erythritol. This is 4-diphosphocytidyl-2-C-methyl-D-erythritol kinase from Prochlorococcus marinus (strain MIT 9215).